The sequence spans 259 residues: Phosphonates import ATP-binding protein PhnC (259 aa).

Residues 4–245 form the ABC transporter domain; sequence ISIQSVTKRF…ALRTIYQREG (242 aa). 37-44 provides a ligand contact to ATP; the sequence is GPSGAGKS.

This sequence belongs to the ABC transporter superfamily. Phosphonates importer (TC 3.A.1.9.1) family. As to quaternary structure, the complex is composed of two ATP-binding proteins (PhnC), two transmembrane proteins (PhnE) and a solute-binding protein (PhnD).

The protein resides in the cell inner membrane. The catalysed reaction is phosphonate(out) + ATP + H2O = phosphonate(in) + ADP + phosphate + H(+). Functionally, part of the ABC transporter complex PhnCDE involved in phosphonates import. Responsible for energy coupling to the transport system. The chain is Phosphonates import ATP-binding protein PhnC from Thiobacillus denitrificans (strain ATCC 25259 / T1).